The chain runs to 74 residues: MAKKPTQDFESTLKELEAIVSHLETGELPLEEALNEFETAVKLVQQGQERLQKAEQRIQILLNKNDQAELSDYE.

This sequence belongs to the XseB family. In terms of assembly, heterooligomer composed of large and small subunits.

The protein localises to the cytoplasm. The enzyme catalyses Exonucleolytic cleavage in either 5'- to 3'- or 3'- to 5'-direction to yield nucleoside 5'-phosphates.. Its function is as follows. Bidirectionally degrades single-stranded DNA into large acid-insoluble oligonucleotides, which are then degraded further into small acid-soluble oligonucleotides. This Actinobacillus pleuropneumoniae serotype 5b (strain L20) protein is Exodeoxyribonuclease 7 small subunit.